A 484-amino-acid chain; its full sequence is Monocarboxylate transporter 2 (484 aa).

Residues 1–16 lie on the Cytoplasmic side of the membrane; that stretch reads MPAPTAVPPPHPLPPD. The chain crosses the membrane as a helical span at residues 17–37; sequence GGWGWVVVGASFISIGFSYAF. Residues 38 to 60 lie on the Extracellular side of the membrane; sequence PKSVTVFFKDIQEIFRAGHSKVA. Residues 61–81 traverse the membrane as a helical segment; it reads WISSIMLAVMYAGGPISSVLV. At 82–87 the chain is on the cytoplasmic side; it reads NKYGSR. Residues 88–108 form a helical membrane-spanning segment; it reads PVVVIGGLLCCTGMILASFST. The Extracellular segment spans residues 109-116; that stretch reads SMIQLYLT. A helical transmembrane segment spans residues 117–137; that stretch reads IGFISGLGLAFNLQPALTILG. The Cytoplasmic segment spans residues 138–144; sequence KYFYRRR. A helical membrane pass occupies residues 145–165; it reads PLASGLAMTGSPVFLSSLAPF. The Extracellular portion of the chain corresponds to 166–174; sequence NQYLFNSYG. The chain crosses the membrane as a helical span at residues 175–195; that stretch reads LKGSFLILGGIFLHSCVAGSL. The Cytoplasmic segment spans residues 196-245; it reads MRPVGTSQQSPKSKSKVSSRHDSSTKKAPKLTLAQRINMFLDFSLFKHRG. A disordered region spans residues 198–223; that stretch reads PVGTSQQSPKSKSKVSSRHDSSTKKA. Residues 246-266 form a helical membrane-spanning segment; that stretch reads FLIYLSGNVIMFLGFFAPVIF. Topologically, residues 267-281 are extracellular; that stretch reads LSPYAKNRGVDDYKA. Residues 282–302 form a helical membrane-spanning segment; sequence AYLLSVMAFVDMFSRPCGGLI. The Cytoplasmic portion of the chain corresponds to 303 to 311; it reads ANTRLVRPR. Residues 312–332 traverse the membrane as a helical segment; the sequence is IQYFFSLAIVFTGVCHLLCPL. Over 333–337 the chain is Extracellular; it reads AESYT. The chain crosses the membrane as a helical span at residues 338 to 358; that stretch reads ALVVYAIFFGYGFGSVSSILF. Over 359–372 the chain is Cytoplasmic; the sequence is ETLMDLVGPARFSS. Residues 373 to 393 form a helical membrane-spanning segment; the sequence is AVGLVTIVECCPVLLGPPLAG. The Extracellular portion of the chain corresponds to 394–405; that stretch reads KLVDETGEHKYL. The helical transmembrane segment at 406–426 threads the bilayer; that stretch reads FVASGAIVVLAGIWLFIGNAI. The Cytoplasmic segment spans residues 427–484; sequence NYRLLAKERKREKARKKKSPNRHSKELESLSKSNQDDVAVRVPQAHRSPSDKERESNI. The disordered stretch occupies residues 437-484; the sequence is REKARKKKSPNRHSKELESLSKSNQDDVAVRVPQAHRSPSDKERESNI. The span at 438 to 448 shows a compositional bias: basic residues; it reads EKARKKKSPNR. 2 stretches are compositionally biased toward basic and acidic residues: residues 449 to 465 and 474 to 484; these read HSKELESLSKSNQDDVA and SPSDKERESNI.

It belongs to the major facilitator superfamily. Monocarboxylate porter (TC 2.A.1.13) family. Homodimer. Interacts with GRID2IP. Interacts with EMB; interaction mediates SLC16A7 targeting to the plasma membrane. Interacts with isoform 2 of BSG.

It localises to the cell membrane. It is found in the basolateral cell membrane. The protein localises to the cytoplasm. It catalyses the reaction 3-methyl-2-oxobutanoate(out) + H(+)(out) = 3-methyl-2-oxobutanoate(in) + H(+)(in). It carries out the reaction (S)-lactate(in) + H(+)(in) = (S)-lactate(out) + H(+)(out). The enzyme catalyses acetoacetate(out) + H(+)(out) = acetoacetate(in) + H(+)(in). The catalysed reaction is (R)-3-hydroxybutanoate(out) + H(+)(out) = (R)-3-hydroxybutanoate(in) + H(+)(in). It catalyses the reaction 4-methyl-2-oxopentanoate(out) + H(+)(out) = 4-methyl-2-oxopentanoate(in) + H(+)(in). It carries out the reaction pyruvate(out) + H(+)(out) = pyruvate(in) + H(+)(in). The enzyme catalyses (S)-3-hydroxybutanoate(out) + H(+)(out) = (S)-3-hydroxybutanoate(in) + H(+)(in). With respect to regulation, transport activity exhibits steep dependence on substrate concentration. Substrate concentration sensitivity of SLC16A7 arises from the strong inter-subunit cooperativity of the SLC16A7 dimer during transport. Inhibited by AR-C155858. In terms of biological role, proton-coupled monocarboxylate symporter. Catalyzes the rapid transport across the plasma membrane of monocarboxylates such as L-lactate, pyruvate and ketone bodies, acetoacetate, beta-hydroxybutyrate and acetate. Dimerization is functionally required and both subunits work cooperatively in transporting substrate. The chain is Monocarboxylate transporter 2 (SLC16A7) from Meriones unguiculatus (Mongolian jird).